A 118-amino-acid chain; its full sequence is uncharacterized protein (118 aa).

The protein to S.pombe tam6.

The protein resides in the mitochondrion. This is an uncharacterized protein from Saccharomyces cerevisiae (strain ATCC 204508 / S288c) (Baker's yeast).